We begin with the raw amino-acid sequence, 331 residues long: DNA-directed RNA polymerase subunit alpha (331 aa).

The tract at residues Met-1 to Glu-233 is alpha N-terminal domain (alpha-NTD). The interval Ala-268–Asp-331 is alpha C-terminal domain (alpha-CTD).

Belongs to the RNA polymerase alpha chain family. As to quaternary structure, in plastids the minimal PEP RNA polymerase catalytic core is composed of four subunits: alpha, beta, beta', and beta''. When a (nuclear-encoded) sigma factor is associated with the core the holoenzyme is formed, which can initiate transcription.

The protein localises to the plastid. The protein resides in the chloroplast. The enzyme catalyses RNA(n) + a ribonucleoside 5'-triphosphate = RNA(n+1) + diphosphate. Its function is as follows. DNA-dependent RNA polymerase catalyzes the transcription of DNA into RNA using the four ribonucleoside triphosphates as substrates. The sequence is that of DNA-directed RNA polymerase subunit alpha from Illicium oligandrum (Star anise).